The following is a 206-amino-acid chain: Outer-membrane lipoprotein LolB (206 aa).

The first 18 residues, 1 to 18, serve as a signal peptide directing secretion; the sequence is MSLLKNLLAPCLALLLAG. Residue Cys19 is the site of N-palmitoyl cysteine attachment. The S-diacylglycerol cysteine moiety is linked to residue Cys19.

The protein belongs to the LolB family. As to quaternary structure, monomer.

The protein resides in the cell outer membrane. In terms of biological role, plays a critical role in the incorporation of lipoproteins in the outer membrane after they are released by the LolA protein. In Stutzerimonas stutzeri (strain A1501) (Pseudomonas stutzeri), this protein is Outer-membrane lipoprotein LolB.